We begin with the raw amino-acid sequence, 281 residues long: MKKLIFLIVIALVLSACNSNSSHAKELNDLEKKYNAHIGVYALDTKSGKEVKFNSDKRFAYASTSKAINSAILLEQVPYNKLNKKVHINKDDIVAYSPILEKYVGKDITLKALIEASMTYSDNTANNKIIKEIGGIKKVKQRLKELGDKVTNPVRYEIELNYYSPKSKKDTSTPAAFGKTLNKLIANGKLSKENKKFLLDLMLNNKSGDTLIKDGVPKDYKVADKSGQAITYASRNDVAFVYPKGQSEPIVLVIFTNKDNKSDKPNDKLISETAKSVMKEF.

The signal sequence occupies residues 1-24 (MKKLIFLIVIALVLSACNSNSSHA). Ser63 (acyl-ester intermediate) is an active-site residue. Substrate is bound at residue 225–227 (KSG).

It belongs to the class-A beta-lactamase family.

It catalyses the reaction a beta-lactam + H2O = a substituted beta-amino acid. This is Beta-lactamase (blaZ) from Staphylococcus aureus.